Consider the following 303-residue polypeptide: Coenzyme PQQ synthesis protein B (303 aa).

The protein belongs to the PqqB family.

Its pathway is cofactor biosynthesis; pyrroloquinoline quinone biosynthesis. May be involved in the transport of PQQ or its precursor to the periplasm. In Acinetobacter baumannii (strain SDF), this protein is Coenzyme PQQ synthesis protein B.